The following is a 299-amino-acid chain: MFLMGPTASGKTALAIEMAQKHNCEIISVDSALIYKQMDIGTAKPNAAELALAPHKLIDILDPSESYSAADFRRDALIEIEAIIKRGKTPLLVGGTMMYFKALLEGLSPLPSADETIRQQIQTRADIEGWEALHQSLCEIDPVAGARIHPNDPQRLSRALEVYYISGKTMTELTQTKSAALPYEVVQFAIAPLDRKVLHELIAKRFTIMLEQGFVEEVNSLMARGDLHLDLPSMRCVGYRQCWQYLEGEFDYDTMVEKATAATRQLAKRQLTWLRGWPDVHWLESGAESNLVTLQRQRG.

An ATP-binding site is contributed by 5 to 12 (GPTASGKT). A substrate-binding site is contributed by 7-12 (TASGKT). Interaction with substrate tRNA stretches follow at residues 30–33 (DSAL), 154–158 (QRLSR), and 235–240 (RCVGYR).

Belongs to the IPP transferase family. In terms of assembly, monomer. The cofactor is Mg(2+).

It carries out the reaction adenosine(37) in tRNA + dimethylallyl diphosphate = N(6)-dimethylallyladenosine(37) in tRNA + diphosphate. In terms of biological role, catalyzes the transfer of a dimethylallyl group onto the adenine at position 37 in tRNAs that read codons beginning with uridine, leading to the formation of N6-(dimethylallyl)adenosine (i(6)A). In Shewanella denitrificans (strain OS217 / ATCC BAA-1090 / DSM 15013), this protein is tRNA dimethylallyltransferase.